The sequence spans 356 residues: Tyrosine recombinase XerS (356 aa).

In terms of domain architecture, Core-binding (CB) spans 16–121; sequence TMPWYILEYY…ALSSLYKYLT (106 aa). Residues 169–354 form the Tyr recombinase domain; sequence EFLQYIDTEY…VNDEQKNALD (186 aa). Active-site residues include R210, K234, H306, R309, and H332. Y341 functions as the O-(3'-phospho-DNA)-tyrosine intermediate in the catalytic mechanism.

Belongs to the 'phage' integrase family. XerS subfamily.

Its subcellular location is the cytoplasm. FtsK is required for recombination. Site-specific tyrosine recombinase, which acts by catalyzing the cutting and rejoining of the recombining DNA molecules. Essential to convert dimers of the bacterial chromosome into monomers to permit their segregation at cell division. This is Tyrosine recombinase XerS from Streptococcus sanguinis (strain SK36).